A 198-amino-acid polypeptide reads, in one-letter code: Peroxynitrite isomerase (198 aa).

The GXWXGXG motif lies at 20 to 26 (GVWEGTG). Histidine 189 contributes to the heme b binding site.

The protein belongs to the nitrobindin family. In terms of assembly, homodimer. Requires heme b as cofactor.

It carries out the reaction peroxynitrite = nitrate. The protein operates within nitrogen metabolism. Its function is as follows. Heme-binding protein able to scavenge peroxynitrite and to protect free L-tyrosine against peroxynitrite-mediated nitration, by acting as a peroxynitrite isomerase that converts peroxynitrite to nitrate. Therefore, this protein likely plays a role in peroxynitrite sensing and in the detoxification of reactive nitrogen and oxygen species (RNS and ROS, respectively). Is able to bind nitric oxide (NO) in vitro, but may act as a sensor of peroxynitrite levels in vivo. The protein is Peroxynitrite isomerase of Leifsonia xyli subsp. xyli (strain CTCB07).